The following is a 324-amino-acid chain: 4-diphosphocytidyl-2-C-methyl-D-erythritol kinase (324 aa).

K11 is an active-site residue. 108 to 118 is an ATP binding site; it reads PIGAGLAGGST. D150 is a catalytic residue.

Belongs to the GHMP kinase family. IspE subfamily.

The enzyme catalyses 4-CDP-2-C-methyl-D-erythritol + ATP = 4-CDP-2-C-methyl-D-erythritol 2-phosphate + ADP + H(+). The protein operates within isoprenoid biosynthesis; isopentenyl diphosphate biosynthesis via DXP pathway; isopentenyl diphosphate from 1-deoxy-D-xylulose 5-phosphate: step 3/6. In terms of biological role, catalyzes the phosphorylation of the position 2 hydroxy group of 4-diphosphocytidyl-2C-methyl-D-erythritol. This Cyanothece sp. (strain PCC 7425 / ATCC 29141) protein is 4-diphosphocytidyl-2-C-methyl-D-erythritol kinase.